The sequence spans 172 residues: Cytidylate kinase (172 aa).

Residue 8–16 (GPPGSGKST) coordinates ATP.

It belongs to the cytidylate kinase family. Type 2 subfamily.

The protein localises to the cytoplasm. It carries out the reaction CMP + ATP = CDP + ADP. It catalyses the reaction dCMP + ATP = dCDP + ADP. The protein is Cytidylate kinase of Ignicoccus hospitalis (strain KIN4/I / DSM 18386 / JCM 14125).